We begin with the raw amino-acid sequence, 207 residues long: Large ribosomal subunit protein uL4 (207 aa).

Residues 45–89 (RQGTHKVKTRSEVRGGGRKPWRQKGTGRARQGSIRSPQWRGGGTV) are disordered. Residues 60–71 (GGRKPWRQKGTG) are compositionally biased toward basic residues.

It belongs to the universal ribosomal protein uL4 family. Part of the 50S ribosomal subunit.

Functionally, one of the primary rRNA binding proteins, this protein initially binds near the 5'-end of the 23S rRNA. It is important during the early stages of 50S assembly. It makes multiple contacts with different domains of the 23S rRNA in the assembled 50S subunit and ribosome. In terms of biological role, forms part of the polypeptide exit tunnel. The chain is Large ribosomal subunit protein uL4 from Bacillus mycoides (strain KBAB4) (Bacillus weihenstephanensis).